A 2251-amino-acid polypeptide reads, in one-letter code: U3 small nucleolar RNA-associated protein 10 (2251 aa).

The HEAT repeat unit spans residues 945-983 (VVPLLLTALADAEAAIRLAAIACLAHILAICKYAGDLAK). 2 consecutive transmembrane segments (helical) span residues 962–982 (LAAI…GDLA) and 1460–1480 (LLVD…LLVD).

It belongs to the HEATR1/UTP10 family. Component of the ribosomal small subunit (SSU) processome.

Its subcellular location is the nucleus. The protein localises to the nucleolus. It localises to the membrane. Functionally, involved in nucleolar processing of pre-18S ribosomal RNA. Involved in ribosome biosynthesis. The protein is U3 small nucleolar RNA-associated protein 10 of Mycosarcoma maydis (Corn smut fungus).